The chain runs to 427 residues: Homeotic protein caudal (427 aa).

Positions 104–273 (QLMQQHHHHH…QPQPGKTRTK (170 aa)) are disordered. Residues 116 to 129 (ASSSSASSGSSSSG) are compositionally biased toward low complexity. Over residues 145–164 (GVGGAGGGGGVGGATDGGPG) the composition is skewed to gly residues. The segment covering 183–195 (ITVSGSEISSPGA) has biased composition (polar residues). A compositionally biased stretch (low complexity) spans 209 to 243 (HLSAVANNNNNNNNNNNSPSTHNNNNNNNSVSNNN). The residue at position 245 (threonine 245) is a Phosphothreonine. The Antp-type hexapeptide signature appears at 252–257 (YFDWMK). The homeobox DNA-binding region spans 273-332 (KDKYRVVYTDFQRLELEKEYCTSRYITIRRKSELAQTLSLSERQVKIWFQNRRAKERKQN).

This sequence belongs to the Caudal homeobox family. As to expression, maternally localized in an anteroposterior gradient in the syncytial blastoderm. Also expressed in the pole cells. Zygotically localized in the primordia of the terminal abdominal segment, the hindgut and in the posterior midgut rudiment. Expressed in the gut, the gonads and parts of the genital disks of third instar larvae (at protein level).

The protein localises to the nucleus. Its function is as follows. Caudal (cad) is one of a number of transcription factors controlling segmentation of the embryo. Further transcriptional regulation via a 5' flanking region containing DNA replication-related elements (DRE) and by dref also regulated by trh and tgo via the CNS midline element. Alongside Bicoid (bcd), caudal forms concentration gradients down the anterior-posterior (A-P) axis providing positional information and subsequent induction of the gap genes. Plays a role in gastrulation/germ band extension, hindgut morphogenesis, positive regulation of cell proliferation, genital disk development and pattern formation. Acts as a key regulator of the Hox gene network and activates transcription via the downstream core promoter element (DPE) relative to the TATA box. Plays a role in the establishment of the hindgut and in the invagination of the hindgut primordium during gastrulation. These effects on the gut are achieved by acting combinatorially at the posterior of the embryo to activate transcription of different targets including fog, fkh and wg. Caudal is involved in regulation of proliferation through transactivation of the E2F gene. Postembryonically its function is mostly restricted to the intestine where it regulates antimicrobial peptide (AMP) levels preserving the normal gut flora. In Drosophila melanogaster (Fruit fly), this protein is Homeotic protein caudal (cad).